Reading from the N-terminus, the 500-residue chain is Maturase K (500 aa).

The protein belongs to the intron maturase 2 family. MatK subfamily.

The protein resides in the plastid. It localises to the chloroplast. Functionally, usually encoded in the trnK tRNA gene intron. Probably assists in splicing its own and other chloroplast group II introns. The polypeptide is Maturase K (Prunus laurocerasus (Cherry laurel)).